The chain runs to 316 residues: DNA-directed RNA polymerase subunit alpha (316 aa).

The segment at 1–229 (MLEMEKPRID…EYLKLFTEID (229 aa)) is alpha N-terminal domain (alpha-NTD). An alpha C-terminal domain (alpha-CTD) region spans residues 246-316 (KDKILEMSIE…LNLSFRKSED (71 aa)).

This sequence belongs to the RNA polymerase alpha chain family. As to quaternary structure, homodimer. The RNAP catalytic core consists of 2 alpha, 1 beta, 1 beta' and 1 omega subunit. When a sigma factor is associated with the core the holoenzyme is formed, which can initiate transcription.

It catalyses the reaction RNA(n) + a ribonucleoside 5'-triphosphate = RNA(n+1) + diphosphate. In terms of biological role, DNA-dependent RNA polymerase catalyzes the transcription of DNA into RNA using the four ribonucleoside triphosphates as substrates. This is DNA-directed RNA polymerase subunit alpha from Syntrophomonas wolfei subsp. wolfei (strain DSM 2245B / Goettingen).